A 157-amino-acid polypeptide reads, in one-letter code: 6,7-dimethyl-8-ribityllumazine synthase (157 aa).

5-amino-6-(D-ribitylamino)uracil is bound by residues tryptophan 27, 59–61 (AIE), and 81–83 (VVI). 86 to 87 (ET) contacts (2S)-2-hydroxy-3-oxobutyl phosphate. The active-site Proton donor is histidine 89. Asparagine 114 provides a ligand contact to 5-amino-6-(D-ribitylamino)uracil. Arginine 128 contributes to the (2S)-2-hydroxy-3-oxobutyl phosphate binding site.

It belongs to the DMRL synthase family. In terms of assembly, homopentamer.

The enzyme catalyses (2S)-2-hydroxy-3-oxobutyl phosphate + 5-amino-6-(D-ribitylamino)uracil = 6,7-dimethyl-8-(1-D-ribityl)lumazine + phosphate + 2 H2O + H(+). The protein operates within cofactor biosynthesis; riboflavin biosynthesis; riboflavin from 2-hydroxy-3-oxobutyl phosphate and 5-amino-6-(D-ribitylamino)uracil: step 1/2. Its function is as follows. Catalyzes the formation of 6,7-dimethyl-8-ribityllumazine by condensation of 5-amino-6-(D-ribitylamino)uracil with 3,4-dihydroxy-2-butanone 4-phosphate. This is the penultimate step in the biosynthesis of riboflavin. This is 6,7-dimethyl-8-ribityllumazine synthase from Mycolicibacterium vanbaalenii (strain DSM 7251 / JCM 13017 / BCRC 16820 / KCTC 9966 / NRRL B-24157 / PYR-1) (Mycobacterium vanbaalenii).